A 276-amino-acid chain; its full sequence is Putative olfactory receptor 10J6 (276 aa).

Residues 1-25 (MRRKNLTEVTEFVFLGFSRFHKHHI) are Extracellular-facing. An N-linked (GlcNAc...) asparagine glycan is attached at N5. Residues 26 to 46 (TLFVVFLILYTLTVAGNAIIM) form a helical membrane-spanning segment. Residues 47–54 (TIICIDRH) lie on the Cytoplasmic side of the membrane. The helical transmembrane segment at 55–75 (LHTPMYFFLSMLASSKTVYTL) threads the bilayer. Residues 76–99 (FIIPQMLSSFVTQTQPISLAGCTT) lie on the Extracellular side of the membrane. C97 and C188 are joined by a disulfide. The helical transmembrane segment at 100–120 (QTFFFVTLAINNCFLLTVMGY) threads the bilayer. Residues 121–139 (DHYMAICNPLRYRVITSKK) are Cytoplasmic-facing. The chain crosses the membrane as a helical span at residues 140 to 160 (VCVQLVCGAFSIGLAMAAVQV). The Extracellular segment spans residues 161 to 196 (TSIFTLPFCHTVVGHFFCDILPVMKLSCINTTINEI). N-linked (GlcNAc...) asparagine glycosylation occurs at N190. Residues 197 to 216 (INFVVRLFVILVPMGLVFIS) traverse the membrane as a helical segment. At 217 to 236 (YVLIISTVLKIASAEGWKKT) the chain is on the cytoplasmic side. Residues 237 to 257 (FATCAFHLTVVIVHYGCASIA) traverse the membrane as a helical segment. Topologically, residues 258–270 (YLMPKSENSIEQD) are extracellular. Residues 271–276 (LLLSVT) traverse the membrane as a helical segment.

This sequence belongs to the G-protein coupled receptor 1 family.

The protein localises to the cell membrane. In terms of biological role, odorant receptor. The chain is Putative olfactory receptor 10J6 (OR10J6P) from Homo sapiens (Human).